Reading from the N-terminus, the 256-residue chain is Acetyl-coenzyme A carboxylase carboxyl transferase subunit alpha (256 aa).

One can recognise a CoA carboxyltransferase C-terminal domain in the interval 1-236 (MTDVARILKE…RSHLIDEITQ (236 aa)).

It belongs to the AccA family. As to quaternary structure, acetyl-CoA carboxylase is a heterohexamer composed of biotin carboxyl carrier protein (AccB), biotin carboxylase (AccC) and two subunits each of ACCase subunit alpha (AccA) and ACCase subunit beta (AccD).

The protein resides in the cytoplasm. It catalyses the reaction N(6)-carboxybiotinyl-L-lysyl-[protein] + acetyl-CoA = N(6)-biotinyl-L-lysyl-[protein] + malonyl-CoA. The protein operates within lipid metabolism; malonyl-CoA biosynthesis; malonyl-CoA from acetyl-CoA: step 1/1. In terms of biological role, component of the acetyl coenzyme A carboxylase (ACC) complex. First, biotin carboxylase catalyzes the carboxylation of biotin on its carrier protein (BCCP) and then the CO(2) group is transferred by the carboxyltransferase to acetyl-CoA to form malonyl-CoA. The protein is Acetyl-coenzyme A carboxylase carboxyl transferase subunit alpha of Streptococcus equi subsp. zooepidemicus (strain MGCS10565).